The sequence spans 415 residues: Stimulator of interferon genes protein (415 aa).

One can recognise a TIR domain in the interval 29-163; it reads HVYHAFISYC…DIIQAISKPE (135 aa). Residue Glu104 is part of the active site. Arg256 is a binding site for 2',3'-cGAMP. A disordered region spans residues 387 to 415; the sequence is KSPSSTNMVKSEPNIYREESGKTKSVERG. The span at 401–415 shows a compositional bias: basic and acidic residues; sequence IYREESGKTKSVERG.

In the N-terminal section; belongs to the Toll-like receptor family. It in the C-terminal section; belongs to the TMEM173 family. As to quaternary structure, homodimer.

The catalysed reaction is NAD(+) + H2O = ADP-D-ribose + nicotinamide + H(+). Sensor of cytosolic DNA from bacteria and viruses that promotes autophagy. Binds c-di-AMP, 2'3'-cGAMP, 3'3'-cGAMP and to a lesser extent c-di-GMP. Nucleotide binding has not been seen to stimulate NAD(+) hydrolase activity. This Magallana gigas (Pacific oyster) protein is Stimulator of interferon genes protein.